We begin with the raw amino-acid sequence, 135 residues long: Ribosome-binding factor A (135 aa).

This sequence belongs to the RbfA family. Monomer. Binds 30S ribosomal subunits, but not 50S ribosomal subunits or 70S ribosomes.

It localises to the cytoplasm. In terms of biological role, one of several proteins that assist in the late maturation steps of the functional core of the 30S ribosomal subunit. Associates with free 30S ribosomal subunits (but not with 30S subunits that are part of 70S ribosomes or polysomes). Required for efficient processing of 16S rRNA. May interact with the 5'-terminal helix region of 16S rRNA. The chain is Ribosome-binding factor A from Bartonella tribocorum (strain CIP 105476 / IBS 506).